A 167-amino-acid chain; its full sequence is NADH-ubiquinone oxidoreductase chain 4 (167 aa).

A run of 3 helical transmembrane segments spans residues 2–22, 44–64, and 86–106; these read FIGA…LFCL, LLPL…ALPP, and IILV…MLIM.

It belongs to the complex I subunit 4 family.

It is found in the mitochondrion membrane. It catalyses the reaction a ubiquinone + NADH + 5 H(+)(in) = a ubiquinol + NAD(+) + 4 H(+)(out). Core subunit of the mitochondrial membrane respiratory chain NADH dehydrogenase (Complex I) that is believed to belong to the minimal assembly required for catalysis. Complex I functions in the transfer of electrons from NADH to the respiratory chain. The immediate electron acceptor for the enzyme is believed to be ubiquinone. In Carlito syrichta (Philippine tarsier), this protein is NADH-ubiquinone oxidoreductase chain 4 (MT-ND4).